Here is an 86-residue protein sequence, read N- to C-terminus: Acyl carrier protein (86 aa).

In terms of domain architecture, Carrier spans 2–82; it reads ATVFERVKKV…AVVDYLKSKG (81 aa). O-(pantetheine 4'-phosphoryl)serine is present on serine 37.

This sequence belongs to the acyl carrier protein (ACP) family. In terms of processing, 4'-phosphopantetheine is transferred from CoA to a specific serine of apo-ACP by AcpS. This modification is essential for activity because fatty acids are bound in thioester linkage to the sulfhydryl of the prosthetic group.

The protein resides in the cytoplasm. It participates in lipid metabolism; fatty acid biosynthesis. Carrier of the growing fatty acid chain in fatty acid biosynthesis. The polypeptide is Acyl carrier protein (Dehalococcoides mccartyi (strain ATCC BAA-2266 / KCTC 15142 / 195) (Dehalococcoides ethenogenes (strain 195))).